The following is an 863-amino-acid chain: NACHT, LRR and PYD domains-containing protein 4B (863 aa).

The Pyrin domain maps to 1–93 (MASLFSDFGF…TNRATGEIAA (93 aa)). The NACHT domain maps to 143 to 466 (KMVVLQGVAG…FYLLHSEMDH (324 aa)). 149–156 (GVAGIGKT) provides a ligand contact to ATP. 7 LRR repeats span residues 618–643 (WHQI…IFNE), 683–706 (SYNL…MLCD), 717–740 (ILDL…LRQN), 741–763 (KSLR…ALCR), 765–782 (LTLP…ACQL), 797–824 (YKCL…AMKD), and 843–863 (SQEF…ENGV).

It belongs to the NLRP family.

Its function is as follows. May be involved in inflammation and recognition of cytosolic pathogen-associated molecular patterns (PAMPs) not intercepted by membrane-bound receptors. This chain is NACHT, LRR and PYD domains-containing protein 4B (Nlrp4b), found in Mus musculus (Mouse).